A 352-amino-acid polypeptide reads, in one-letter code: Extracellular minor metalloprotease (352 aa).

2 disordered regions span residues 41 to 86 (GNKP…QPRR) and 144 to 164 (TARS…ELTH). Residues 48 to 57 (PTEKNARAGE) are compositionally biased toward basic and acidic residues. Composition is skewed to low complexity over residues 71–85 (ARQT…QQPR) and 144–156 (TARS…SPST). Residue H160 coordinates Zn(2+). Residue E161 is part of the active site. The Zn(2+) site is built by H164 and E184. H262 serves as the catalytic Proton donor. The disordered stretch occupies residues 303–325 (TPTSDHLRPRHGETRAGLRTKRG). The span at 304–325 (PTSDHLRPRHGETRAGLRTKRG) shows a compositional bias: basic and acidic residues.

The protein belongs to the peptidase M4 family. Requires Zn(2+) as cofactor.

It localises to the secreted. This chain is Extracellular minor metalloprotease (smp), found in Serratia marcescens (strain ATCC 21074 / E-15).